A 535-amino-acid polypeptide reads, in one-letter code: Large neutral amino acids transporter small subunit 2 (535 aa).

The segment covering 1–17 (MEEGARHRNNTEKKHPG) has biased composition (basic and acidic residues). Positions 1 to 30 (MEEGARHRNNTEKKHPGGGESDASPEAGSG) are disordered. The Cytoplasmic segment spans residues 1–44 (MEEGARHRNNTEKKHPGGGESDASPEAGSGGGGVALKKEIGLVS). At S29 the chain carries Phosphoserine. Residues 45-65 (ACGIIVGNIIGSGIFVSPKGV) traverse the membrane as a helical segment. Residue I53 coordinates L-leucine. The Extracellular segment spans residues 66 to 73 (LENAGSVG). A helical transmembrane segment spans residues 74–95 (LALIVWIVTGFITVVGALCYAE). Topologically, residues 96-116 (LGVTIPKSGGDYSYVKDIFGG) are cytoplasmic. A helical transmembrane segment spans residues 117–149 (LAGFLRLWIAVLVIYPTNQAVIALTFSNYVLQP). L-tryptophan is bound at residue N134. Residues 150 to 157 (LFPTCFPP) are Extracellular-facing. The chain crosses the membrane as a helical span at residues 158–178 (ESGLRLLAAICLLLLTWVNCS). The Cytoplasmic segment spans residues 179 to 181 (SVR). The helical transmembrane segment at 182 to 210 (WATRVQDIFTAGKLLALALIIIMGIVQIC) threads the bilayer. Residues 211–230 (KGEYFWLEPKNAFENFQEPD) are Extracellular-facing. Residues 231–252 (IGLVALAFLQGSFAYGGWNFLN) form a helical membrane-spanning segment. G246 serves as a coordination point for L-leucine. The Cytoplasmic segment spans residues 253 to 265 (YVTEELVDPYKNL). The helical transmembrane segment at 266–287 (PRAIFISIPLVTFVYVFANVAY) threads the bilayer. At 288 to 312 (VTAMSPQELLASNAVAVTFGEKLLG) the chain is on the extracellular side. A helical membrane pass occupies residues 313 to 338 (VMAWIMPISVALSTFGGVNGSLFTSS). The Cytoplasmic portion of the chain corresponds to 339–364 (RLFFAGAREGHLPSVLAMIHVKRCTP). A helical membrane pass occupies residues 365–382 (IPALLFTCISTLLMLVTS). Residues 383–386 (DMYT) are Extracellular-facing. A helical membrane pass occupies residues 387–408 (LINYVGFINYLFYGVTVAGQIV). Residue N395 participates in L-tryptophan binding. Over 409-423 (LRWKKPDIPRPIKIN) the chain is Cytoplasmic. A run of 2 helical transmembrane segments spans residues 424–446 (LLFPIIYLLFWAFLLVFSLWSEP) and 447–466 (VVCGIGLAIMLTGVPVYFLG). Residues 467–535 (VYWQHKPKCF…DKDVAGQPQP (69 aa)) are Cytoplasmic-facing. Residues 502–535 (SGTEEANEDMEEQQQPMYQPTPTKDKDVAGQPQP) are disordered. Residues 514–523 (QQQPMYQPTP) are compositionally biased toward polar residues.

Belongs to the amino acid-polyamine-organocation (APC) superfamily. L-type amino acid transporter (LAT) (TC 2.A.3.8) family. In terms of assembly, disulfide-linked heterodimer composed of the catalytic light chain subunit SLC7A8 and the heavy chain subunit SLC3A2. SLC3A2 acts as chaperones for correct plasma membrane trafficking and stabilization of SLC7A8 and modulates the substrate affinity and specificity of SLC7A8. ICAM-1 associates with the heterodimer SLC3A2/SLC7A8; this interaction regulates SLC7A8 activity. In terms of tissue distribution, strongest expression is observed in kidney and moderate expression in placenta and brain, followed by liver, prostate, testis, ovary, lymph node, thymus, spleen, skeletal muscle and heart. Also expressed in fetal liver as well as in the retinal pigment epithelial cell line ARPE-19 and the intestinal epithelial cell line Caco-2.

It localises to the cell membrane. It is found in the basolateral cell membrane. The enzyme catalyses L-histidine(in) + L-phenylalanine(out) = L-histidine(out) + L-phenylalanine(in). The catalysed reaction is L-tryptophan(in) + L-phenylalanine(out) = L-tryptophan(out) + L-phenylalanine(in). It catalyses the reaction L-isoleucine(in) + L-phenylalanine(out) = L-isoleucine(out) + L-phenylalanine(in). It carries out the reaction L-valine(in) + L-phenylalanine(out) = L-valine(out) + L-phenylalanine(in). The enzyme catalyses L-leucine(in) + L-phenylalanine(out) = L-leucine(out) + L-phenylalanine(in). The catalysed reaction is L-glutamine(in) + L-phenylalanine(out) = L-glutamine(out) + L-phenylalanine(in). It catalyses the reaction L-cysteine(in) + L-phenylalanine(out) = L-cysteine(out) + L-phenylalanine(in). It carries out the reaction L-phenylalanine(out) + L-methionine(in) = L-phenylalanine(in) + L-methionine(out). The enzyme catalyses L-leucine(out) + L-methionine(in) = L-leucine(in) + L-methionine(out). The catalysed reaction is L-cysteine(out) + L-methionine(in) = L-cysteine(in) + L-methionine(out). It catalyses the reaction S-methylmercury-L-cysteine(out) + L-methionine(in) = S-methylmercury-L-cysteine(in) + L-methionine(out). It carries out the reaction S-methylmercury-L-cysteine(in) + L-leucine(out) = S-methylmercury-L-cysteine(out) + L-leucine(in). The enzyme catalyses S-methylmercury-L-cysteine(in) + L-phenylalanine(out) = S-methylmercury-L-cysteine(out) + L-phenylalanine(in). The catalysed reaction is L-phenylalanine(out) + L-serine(in) = L-phenylalanine(in) + L-serine(out). It catalyses the reaction L-phenylalanine(out) + glycine(in) = L-phenylalanine(in) + glycine(out). It carries out the reaction L-phenylalanine(out) + L-alanine(in) = L-phenylalanine(in) + L-alanine(out). The enzyme catalyses 3,3'-diiodo-L-thyronine(out) = 3,3'-diiodo-L-thyronine(in). The catalysed reaction is 3,3',5-triiodo-L-thyronine(out) = 3,3',5-triiodo-L-thyronine(in). It catalyses the reaction L-dopa(out) + L-phenylalanine(in) = L-dopa(in) + L-phenylalanine(out). With respect to regulation, inhibited by the L-type inhibitor 2-Aminobicyclo-(2,2,1)-heptane-2-carboxylic acid (BCH). Functionally, associates with SLC3A2 to form a functional heterodimeric complex that translocates small and large neutral amino acids with broad specificity and a stoichiometry of 1:1. Functions as amino acid antiporter mediating the influx of extracellular essential amino acids mainly in exchange with the efflux of highly concentrated intracellular amino acids. Has relatively symmetrical selectivities but strongly asymmetrical substrate affinities at both the intracellular and extracellular sides of the transporter. This asymmetry allows SLC7A8 to regulate intracellular amino acid pools (mM concentrations) by exchange with external amino acids (uM concentration range), equilibrating the relative concentrations of different amino acids across the plasma membrane instead of mediating their net uptake. May play an essential role in the reabsorption of neutral amino acids from the epithelial cells to the bloodstream in the kidney. Involved in the uptake of methylmercury (MeHg) when administered as the L-cysteine or D,L-homocysteine complexes, and hence plays a role in metal ion homeostasis and toxicity. Involved in the cellular activity of small molecular weight nitrosothiols, via the stereoselective transport of L-nitrosocysteine (L-CNSO) across the transmembrane. Imports the thyroid hormone diiodothyronine (T2) and to a smaller extent triiodothyronine (T3) but not rT 3 or thyroxine (T4). Mediates the uptake of L-DOPA. May participate in auditory function. This Homo sapiens (Human) protein is Large neutral amino acids transporter small subunit 2.